The primary structure comprises 221 residues: Interleukin-12 subunit alpha (221 aa).

Residues 1 to 25 (MCPLRSLLLISTLVLLHHLPHLSLG) form the signal peptide. Intrachain disulfides connect cysteine 39–cysteine 112, cysteine 66–cysteine 198, and cysteine 87–cysteine 125. An N-linked (GlcNAc...) asparagine glycan is attached at asparagine 95.

Belongs to the IL-6 superfamily. As to quaternary structure, heterodimer with IL12B; disulfide-linked. This heterodimer is known as interleukin IL-12. Heterodimer with EBI3/IL27B; not disulfide-linked. This heterodimer is known as interleukin IL-35. Interacts with NBR1; this interaction promotes IL-12 secretion.

It localises to the secreted. In terms of biological role, heterodimerizes with IL12B to form the IL-12 cytokine or with EBI3/IL27B to form the IL-35 cytokine. IL-12 is primarily produced by professional antigen-presenting cells (APCs) such as B-cells and dendritic cells (DCs) as well as macrophages and granulocytes and regulates T-cell and natural killer-cell responses, induces the production of interferon-gamma (IFN-gamma), favors the differentiation of T-helper 1 (Th1) cells and is an important link between innate resistance and adaptive immunity. Mechanistically, exerts its biological effects through a receptor composed of IL12R1 and IL12R2 subunits. Binding to the receptor results in the rapid tyrosine phosphorylation of a number of cellular substrates including the JAK family kinases TYK2 and JAK2. In turn, recruited STAT4 gets phosphorylated and translocates to the nucleus where it regulates cytokine/growth factor responsive genes. As part of IL-35, plays essential roles in maintaining the immune homeostasis of the liver microenvironment and also functions as an immune-suppressive cytokine. Mediates biological events through unconventional receptors composed of IL12RB2 and gp130/IL6ST heterodimers or homodimers. Signaling requires the transcription factors STAT1 and STAT4, which form a unique heterodimer that binds to distinct DNA sites. The protein is Interleukin-12 subunit alpha (IL12A) of Ovis aries (Sheep).